A 166-amino-acid polypeptide reads, in one-letter code: uncharacterized protein (166 aa).

3 Pentapeptide repeat domains span residues 38–77 (GECL…NLRR), 78–117 (ALLD…NLER), and 118–157 (SFLR…EFWE).

This is an uncharacterized protein from Synechocystis sp. (strain ATCC 27184 / PCC 6803 / Kazusa).